The following is a 1419-amino-acid chain: L-2-aminoadipate reductase (1419 aa).

One can recognise a Carrier domain in the interval 880-956 (ETLTATERDI…GLAKEIERMK (77 aa)). The residue at position 916 (serine 916) is an O-(pantetheine 4'-phosphoryl)serine.

The protein belongs to the ATP-dependent AMP-binding enzyme family. The cofactor is pantetheine 4'-phosphate.

The protein localises to the cytoplasm. The enzyme catalyses (S)-2-amino-6-oxohexanoate + NADP(+) + H2O = L-2-aminoadipate + NADPH + 2 H(+). The catalysed reaction is (S)-2-amino-6-oxohexanoate + NAD(+) + H2O = L-2-aminoadipate + NADH + 2 H(+). It carries out the reaction (S)-2-amino-6-oxohexanoate + AMP + diphosphate + NADP(+) = L-2-aminoadipate + ATP + NADPH + H(+). The protein operates within amino-acid biosynthesis; L-lysine biosynthesis via AAA pathway; L-lysine from L-alpha-aminoadipate (fungal route): step 1/3. In terms of biological role, catalyzes the activation of alpha-aminoadipate by ATP-dependent adenylation and the reduction of activated alpha-aminoadipate by NADPH. The activated alpha-aminoadipate is bound to the phosphopantheinyl group of the enzyme itself before it is reduced to (S)-2-amino-6-oxohexanoate. The sequence is that of L-2-aminoadipate reductase (lys1) from Schizosaccharomyces pombe (strain 972 / ATCC 24843) (Fission yeast).